The sequence spans 91 residues: MEPIPKLLAGLLLLTLCVVGCSSQHWSYGLRPGGKRNAENVIDSFQEMAKEVARLAEPQRFECTAHQPRSPLRDLKGALESLIEEETGQKT.

Positions 1–23 are cleaved as a signal peptide; the sequence is MEPIPKLLAGLLLLTLCVVGCSS. Gln24 carries the pyrrolidone carboxylic acid modification. Gly33 bears the Glycine amide mark.

Belongs to the GnRH family. Post-translationally, the precursor is cleaved by ACE, which removes the Gly-Lys-Arg peptide at the C-terminus, leading to mature hormone. The mature form of Gonadoliberin-1 is also cleaved and degraded by ACE.

It localises to the secreted. Stimulates the secretion of gonadotropins; it stimulates the secretion of both luteinizing and follicle-stimulating hormones. The chain is Progonadoliberin-1 (GNRH1) from Sus scrofa (Pig).